The primary structure comprises 793 residues: Serine/threonine-protein kinase CLA4 (793 aa).

The disordered stretch occupies residues 8–27 (RELSESDFQDIGPAPKPPPV). A PH domain is found at 56–168 (QRKKSGWVSY…WLDSIFSKCP (113 aa)). A CRIB domain is found at 173 to 186 (VSSPTNFTHKVHVG). Disordered regions lie at residues 243-369 (AAAQ…ESPT) and 383-476 (QKQL…RPTM). 3 stretches are compositionally biased toward polar residues: residues 258-276 (TLSSNSSQASMQQIASTPP), 312-337 (GVTTSPSVHHQNTQHGKQQSPTQSGP), and 355-369 (LGNSVSSVATKESPT). A Protein kinase domain is found at 498–776 (FQMIEKAGQG…TEELLHHSFF (279 aa)). Residues 504-512 (AGQGASGSV) and Lys-545 contribute to the ATP site. The Proton acceptor role is filled by Asp-644.

Belongs to the protein kinase superfamily. STE Ser/Thr protein kinase family. STE20 subfamily.

It carries out the reaction L-seryl-[protein] + ATP = O-phospho-L-seryl-[protein] + ADP + H(+). The enzyme catalyses L-threonyl-[protein] + ATP = O-phospho-L-threonyl-[protein] + ADP + H(+). Functionally, required for hyphal maturation and for septation. This is Serine/threonine-protein kinase CLA4 (CLA4) from Eremothecium gossypii (strain ATCC 10895 / CBS 109.51 / FGSC 9923 / NRRL Y-1056) (Yeast).